Here is a 549-residue protein sequence, read N- to C-terminus: NAC domain-containing protein 53 (549 aa).

The region spanning 9 to 159 is the NAC domain; the sequence is LAPGFRFHPT…AFVLCRIFQK (151 aa). Residues 108 to 165 mediate DNA binding; it reads VGMKKTLVYHKGRAPRGERTNWVMHEYRLVDQDLDKTGVHQDAFVLCRIFQKSGSGPK. Residues 395 to 416 show a composition bias toward basic and acidic residues; it reads LEKEETSRSKHVVEEKEKDEAS. Residues 395 to 418 are disordered; the sequence is LEKEETSRSKHVVEEKEKDEASCS. A helical membrane pass occupies residues 526-546; sequence LIFMCFWVLLLSVSFKVSILV.

As to expression, expressed in roots, rosette leaves, cauline leaves, shoot apex and stems.

It is found in the endoplasmic reticulum membrane. Its subcellular location is the nucleus. In terms of biological role, transcriptional activator activated by proteolytic cleavage through regulated intramembrane proteolysis (RIP). Promotes reactive oxygen species (ROS) production during drought-induced leaf senescence. In response to abscisic acid (ABA)-mediated drought stress signals, binds directly to the promoters of RBOHC and RBOHE genes, encoding ROS biosynthetic enzymes, resulting in ROS accumulation and triggering leaf senescence via programmed cell death (PCD). ROS-induced leaf senescence sustains plant survival under drought conditions. Involved in heat stress response. Modulates PCD through a ROS-mediated positive feedback control under heat stress conditions. This may provide an adaptation strategy for plant survival under extreme heat stress conditions. Acts as a repressor in preventing anther dehiscence during stamen development by suppressing genes that participate in jasmonic acid (JA) biosynthesis, such as DAD1, AOS, AOC3, OPR3 and 4CLL5/OPCL1. This chain is NAC domain-containing protein 53, found in Arabidopsis thaliana (Mouse-ear cress).